A 119-amino-acid chain; its full sequence is Large ribosomal subunit protein bL20 (119 aa).

The protein belongs to the bacterial ribosomal protein bL20 family.

Functionally, binds directly to 23S ribosomal RNA and is necessary for the in vitro assembly process of the 50S ribosomal subunit. It is not involved in the protein synthesizing functions of that subunit. The polypeptide is Large ribosomal subunit protein bL20 (Geobacillus kaustophilus (strain HTA426)).